The sequence spans 317 residues: Transaldolase (317 aa).

Lysine 132 functions as the Schiff-base intermediate with substrate in the catalytic mechanism.

The protein belongs to the transaldolase family. Type 1 subfamily. As to quaternary structure, homodimer.

Its subcellular location is the cytoplasm. The catalysed reaction is D-sedoheptulose 7-phosphate + D-glyceraldehyde 3-phosphate = D-erythrose 4-phosphate + beta-D-fructose 6-phosphate. Its pathway is carbohydrate degradation; pentose phosphate pathway; D-glyceraldehyde 3-phosphate and beta-D-fructose 6-phosphate from D-ribose 5-phosphate and D-xylulose 5-phosphate (non-oxidative stage): step 2/3. Transaldolase is important for the balance of metabolites in the pentose-phosphate pathway. The polypeptide is Transaldolase (Shewanella amazonensis (strain ATCC BAA-1098 / SB2B)).